The sequence spans 298 residues: Oxygen-dependent coproporphyrinogen-III oxidase (298 aa).

Ser90 is a binding site for substrate. Residues His94 and His104 each contribute to the a divalent metal cation site. His104 functions as the Proton donor in the catalytic mechanism. Substrate is bound at residue 106 to 108 (NVR). 2 residues coordinate a divalent metal cation: His143 and His173. Positions 238–273 (YVEFNLVWDRGTLFGLQSGGRTESILMSLPPIVKWR) are important for dimerization. 256–258 (GGR) serves as a coordination point for substrate.

The protein belongs to the aerobic coproporphyrinogen-III oxidase family. In terms of assembly, homodimer. A divalent metal cation serves as cofactor.

The protein resides in the cytoplasm. It carries out the reaction coproporphyrinogen III + O2 + 2 H(+) = protoporphyrinogen IX + 2 CO2 + 2 H2O. It functions in the pathway porphyrin-containing compound metabolism; protoporphyrin-IX biosynthesis; protoporphyrinogen-IX from coproporphyrinogen-III (O2 route): step 1/1. In terms of biological role, involved in the heme biosynthesis. Catalyzes the aerobic oxidative decarboxylation of propionate groups of rings A and B of coproporphyrinogen-III to yield the vinyl groups in protoporphyrinogen-IX. This Dechloromonas aromatica (strain RCB) protein is Oxygen-dependent coproporphyrinogen-III oxidase.